The following is a 343-amino-acid chain: Protein RecA (343 aa).

64-71 (GPESSGKT) is a binding site for ATP.

It belongs to the RecA family.

The protein localises to the cytoplasm. Functionally, can catalyze the hydrolysis of ATP in the presence of single-stranded DNA, the ATP-dependent uptake of single-stranded DNA by duplex DNA, and the ATP-dependent hybridization of homologous single-stranded DNAs. It interacts with LexA causing its activation and leading to its autocatalytic cleavage. The protein is Protein RecA of Bacillus mycoides (strain KBAB4) (Bacillus weihenstephanensis).